Reading from the N-terminus, the 428-residue chain is Adenylosuccinate synthetase (428 aa).

GTP-binding positions include 12–18 and 40–42; these read GDEGKGK and GHT. The Proton acceptor role is filled by Asp-13. Asp-13 and Gly-40 together coordinate Mg(2+). IMP is bound by residues 13-16, 38-41, Thr-131, Arg-145, Gln-226, Thr-241, and Arg-305; these read DEGK and NAGH. Residue His-41 is the Proton donor of the active site. 301-307 lines the substrate pocket; the sequence is ATTGRKR. Residues Arg-307, 333–335, and 415–417 contribute to the GTP site; these read KLD and SVG.

Belongs to the adenylosuccinate synthetase family. In terms of assembly, homodimer. The cofactor is Mg(2+).

It localises to the cytoplasm. The enzyme catalyses IMP + L-aspartate + GTP = N(6)-(1,2-dicarboxyethyl)-AMP + GDP + phosphate + 2 H(+). The protein operates within purine metabolism; AMP biosynthesis via de novo pathway; AMP from IMP: step 1/2. Plays an important role in the de novo pathway of purine nucleotide biosynthesis. Catalyzes the first committed step in the biosynthesis of AMP from IMP. The polypeptide is Adenylosuccinate synthetase (Nitratidesulfovibrio vulgaris (strain DSM 19637 / Miyazaki F) (Desulfovibrio vulgaris)).